The chain runs to 147 residues: Large ribosomal subunit protein uL13 (147 aa).

This sequence belongs to the universal ribosomal protein uL13 family. In terms of assembly, part of the 50S ribosomal subunit.

This protein is one of the early assembly proteins of the 50S ribosomal subunit, although it is not seen to bind rRNA by itself. It is important during the early stages of 50S assembly. The sequence is that of Large ribosomal subunit protein uL13 from Salinispora arenicola (strain CNS-205).